Here is a 1024-residue protein sequence, read N- to C-terminus: SWI/SNF-related matrix-associated actin-dependent regulator of chromatin subfamily A containing DEAD/H box 1 (1024 aa).

Position 1 is an N-acetylmethionine (Met1). The segment at 1–83 (MNLFNLDRFR…NESKASLSCF (83 aa)) is disordered. Residues 7-19 (DRFRFEKRSKIEE) show a composition bias toward basic and acidic residues. Thr54 bears the Phosphothreonine mark. At Ser57 the chain carries Phosphoserine. Lys77 is covalently cross-linked (Glycyl lysine isopeptide (Lys-Gly) (interchain with G-Cter in SUMO2)). 6 positions are modified to phosphoserine: Ser79, Ser124, Ser127, Ser132, Ser145, and Ser151. The 43-residue stretch at 156 to 198 (LKDAKLQTLKELFPQRSDSDLLKLIDSTSTMDGAIAAALLKFG) folds into the CUE 1 domain. Residues 201–250 (GGGPRKRKLSSSSEAYEEDEANDDQSLKKPRGDRREESNESAEASSNWEK) are disordered. Phosphoserine occurs at positions 210 and 213. Position 216 is a phosphotyrosine (Tyr216). Ser238 and Ser241 each carry phosphoserine. The CUE 2 domain occupies 250-293 (KQESIVLKLQKEFPNFDKQELREVLKEHEWMYTEALESLKVFAE). Ser301 is subject to Phosphoserine. Residues 331-369 (SMKPQNGFNKKRKKNVFNPKKAVEDSEYDSGSDAGSSLD) form a disordered region. Residues Lys333 and Lys469 each participate in a glycyl lysine isopeptide (Lys-Gly) (interchain with G-Cter in SUMO2) cross-link. In terms of domain architecture, Helicase ATP-binding spans 507–675 (ALVHKHGLNG…MSLLNFVMPH (169 aa)). 519 to 527 (ADEMGLGKT) contacts ATP. Positions 626-629 (DEGH) match the DEGH box motif. Positions 719 to 736 (RRVKEEVLKLLPPKKDQI) match the Nuclear localization signal motif. Lys722 is covalently cross-linked (Glycyl lysine isopeptide (Lys-Gly) (interchain with G-Cter in SUMO2)). In terms of domain architecture, Helicase C-terminal spans 856-1008 (TLGCILSELK…MTTVDEADEG (153 aa)). 895–902 (YLRLDGKT) lines the ATP pocket. Residue Lys994 forms a Glycyl lysine isopeptide (Lys-Gly) (interchain with G-Cter in SUMO2) linkage. The DEAD box motif lies at 1003-1006 (DEAD).

Belongs to the SNF2/RAD54 helicase family. Binds to DNA preferentially in the vicinity of transcriptional start sites. Interacts with MSH2 and TRIM28. Part of a complex composed of TRIM28, HDAC1, HDAC2 and EHMT2. Interacts with PCNA.

It is found in the nucleus. The protein resides in the chromosome. It carries out the reaction ATP + H2O = ADP + phosphate + H(+). Functionally, DNA helicase that possesses intrinsic ATP-dependent nucleosome-remodeling activity and is both required for DNA repair and heterochromatin organization. Promotes DNA end resection of double-strand breaks (DSBs) following DNA damage: probably acts by weakening histone DNA interactions in nucleosomes flanking DSBs. Required for the restoration of heterochromatin organization after replication. Acts at replication sites to facilitate the maintenance of heterochromatin by directing H3 and H4 histones deacetylation, H3 'Lys-9' trimethylation (H3K9me3) and restoration of silencing. The sequence is that of SWI/SNF-related matrix-associated actin-dependent regulator of chromatin subfamily A containing DEAD/H box 1 (Smarcad1) from Rattus norvegicus (Rat).